Here is a 643-residue protein sequence, read N- to C-terminus: Phosphomethylpyrimidine synthase (643 aa).

Substrate is bound by residues Asn248, Met277, Tyr306, His342, Ser362–Gly364, Asp403–Arg406, and Glu442. His446 provides a ligand contact to Zn(2+). Tyr469 serves as a coordination point for substrate. His510 lines the Zn(2+) pocket. Cys590, Cys593, and Cys598 together coordinate [4Fe-4S] cluster.

Belongs to the ThiC family. In terms of assembly, homodimer. [4Fe-4S] cluster is required as a cofactor.

The catalysed reaction is 5-amino-1-(5-phospho-beta-D-ribosyl)imidazole + S-adenosyl-L-methionine = 4-amino-2-methyl-5-(phosphooxymethyl)pyrimidine + CO + 5'-deoxyadenosine + formate + L-methionine + 3 H(+). The protein operates within cofactor biosynthesis; thiamine diphosphate biosynthesis. Catalyzes the synthesis of the hydroxymethylpyrimidine phosphate (HMP-P) moiety of thiamine from aminoimidazole ribotide (AIR) in a radical S-adenosyl-L-methionine (SAM)-dependent reaction. The sequence is that of Phosphomethylpyrimidine synthase from Burkholderia cenocepacia (strain HI2424).